Reading from the N-terminus, the 577-residue chain is Arginine--tRNA ligase (577 aa).

Positions 122 to 132 (PNVAKEMHVGH) match the 'HIGH' region motif.

This sequence belongs to the class-I aminoacyl-tRNA synthetase family. In terms of assembly, monomer.

It localises to the cytoplasm. The catalysed reaction is tRNA(Arg) + L-arginine + ATP = L-arginyl-tRNA(Arg) + AMP + diphosphate. This chain is Arginine--tRNA ligase, found in Salmonella enteritidis PT4 (strain P125109).